The chain runs to 162 residues: MKSRKFFSKLKEESYDVSIFDLMNAKVYLEKDMAYLPEDYKKGYLEDFFTFFPEVLKEIRNKTEEELEDFEIEEEEIRKVDLRLFSMGSKRTGRDSYEKLVKTVINYLIFINKRPLHALTTRFPGGKQIIEKNGNYYCPIKNAQSNELSICEFCICKDLNEL.

Belongs to the UPF0305 family.

The sequence is that of UPF0305 protein MmarC5_0909 from Methanococcus maripaludis (strain C5 / ATCC BAA-1333).